The following is a 58-amino-acid chain: Large ribosomal subunit protein bL32 (58 aa).

It belongs to the bacterial ribosomal protein bL32 family.

In Synechococcus sp. (strain WH7803), this protein is Large ribosomal subunit protein bL32.